Consider the following 175-residue polypeptide: Shikimate kinase (175 aa).

11-16 (GAGKTT) is a binding site for ATP. Thr15 is a binding site for Mg(2+). Positions 33, 57, and 79 each coordinate substrate. Arg118 contributes to the ATP binding site. Arg140 is a binding site for substrate.

The protein belongs to the shikimate kinase family. Monomer. It depends on Mg(2+) as a cofactor.

The protein localises to the cytoplasm. The catalysed reaction is shikimate + ATP = 3-phosphoshikimate + ADP + H(+). Its pathway is metabolic intermediate biosynthesis; chorismate biosynthesis; chorismate from D-erythrose 4-phosphate and phosphoenolpyruvate: step 5/7. Its function is as follows. Catalyzes the specific phosphorylation of the 3-hydroxyl group of shikimic acid using ATP as a cosubstrate. The chain is Shikimate kinase from Phocaeicola vulgatus (strain ATCC 8482 / DSM 1447 / JCM 5826 / CCUG 4940 / NBRC 14291 / NCTC 11154) (Bacteroides vulgatus).